The following is a 485-amino-acid chain: Tektin-5 (485 aa).

4 coiled-coil regions span residues 113-185, 225-251, 342-385, and 423-443; these read SRLT…EVNC, QQQM…ALER, FNAR…MAKE, and DDTL…LQLL.

The protein belongs to the tektin family. Microtubule inner protein component of sperm flagellar doublet microtubules. Interacts with TEKT3. In terms of processing, ubiquitinated, leading to its degradation. Deubiquitinated by USP16, promoting its stability.

The protein localises to the cytoplasm. It localises to the cytoskeleton. It is found in the flagellum axoneme. Its function is as follows. Sperm-specific microtubule inner protein (MIP) part of the dynein-decorated doublet microtubules (DMTs) in flagellar axoneme. Forms an extensive interaction network in different conformations that reinforces the helix bundle composed by other tektin proteins (TEKT1 to TEKT4) and MIPs to anchor the tektin bundle onto the tubulin wall of A-tubule of the sperm flagellum. This chain is Tektin-5 (TEKT5), found in Macaca fascicularis (Crab-eating macaque).